A 113-amino-acid chain; its full sequence is Hydrogenase maturation factor HypA (113 aa).

His2 contacts Ni(2+). Zn(2+) contacts are provided by Cys73, Cys76, Cys89, and Cys92.

It belongs to the HypA/HybF family.

Functionally, involved in the maturation of [NiFe] hydrogenases. Required for nickel insertion into the metal center of the hydrogenase. The polypeptide is Hydrogenase maturation factor HypA (Paracoccus denitrificans (strain Pd 1222)).